A 418-amino-acid chain; its full sequence is Aspartate aminotransferase 1 (418 aa).

K264 is subject to N6-(pyridoxal phosphate)lysine.

Belongs to the class-I pyridoxal-phosphate-dependent aminotransferase family. Homodimer. Pyridoxal 5'-phosphate serves as cofactor. Nodules, roots, stems and leaves, in decreasing order of aspartate aminotransferase 1 concentration. Is the predominant aspartate aminotransferase isoenzyme in roots.

The protein resides in the cytoplasm. The catalysed reaction is L-aspartate + 2-oxoglutarate = oxaloacetate + L-glutamate. Functionally, important for the metabolism of amino acids and Krebs-cycle related organic acids. In plants, it is involved in nitrogen metabolism and in aspects of carbon and energy metabolism. This is Aspartate aminotransferase 1 (AAT-1) from Medicago sativa (Alfalfa).